The chain runs to 1008 residues: Histone deacetylase complex subunit SAP130-A (1008 aa).

The span at 1–31 (MNSQQFPRQAASMPSPQVSNSGASVGQNVQG) shows a compositional bias: polar residues. Disordered regions lie at residues 1–44 (MNSQ…DVQS), 113–134 (SKST…SAVP), 415–435 (IQSD…HRAS), and 617–720 (TPGG…PATI). A compositionally biased stretch (basic and acidic residues) spans 35-44 (EVARDMDVQS). Over residues 618–644 (PGGTTVMQSHSQSPGIGSSPAQGSSPR) the composition is skewed to polar residues. Over residues 678–697 (ADQPSAAASLPSSHHPAAAV) the composition is skewed to low complexity.

The protein belongs to the SAP130 family.

It is found in the nucleus. Acts as a transcriptional repressor. This chain is Histone deacetylase complex subunit SAP130-A (sap130-a), found in Xenopus laevis (African clawed frog).